Consider the following 107-residue polypeptide: Large ribosomal subunit protein bL21c (107 aa).

Belongs to the bacterial ribosomal protein bL21 family. As to quaternary structure, part of the 50S ribosomal subunit.

The protein resides in the plastid. It is found in the chloroplast. Its function is as follows. This protein binds to 23S rRNA. This chain is Large ribosomal subunit protein bL21c, found in Cyanidioschyzon merolae (strain NIES-3377 / 10D) (Unicellular red alga).